Reading from the N-terminus, the 118-residue chain is MICOS complex subunit MIC13 (118 aa).

The Mitochondrial matrix segment spans residues 1 to 7 (MVPRVWS). A helical membrane pass occupies residues 8–26 (LMRFLIKGSVAGGAIYLVY). Residues 27–118 (DQDPLGPSDK…GWEYLKERTK (92 aa)) lie on the Mitochondrial intermembrane side of the membrane.

Belongs to the MICOS complex subunit Mic13 family. As to quaternary structure, component of the mitochondrial contact site and cristae organizing system (MICOS) complex, composed of at least MICOS10/MIC10, CHCHD3/MIC19, CHCHD6/MIC25, APOO/MIC26, MICOS13/MIC13, APOOL/MIC27 and IMMT/MIC60. The MICOS complex associates with mitochondrial outer membrane proteins SAMM50, MTX1 and MTX2 (together described as components of the mitochondrial outer membrane sorting assembly machinery (SAM) complex) and DNAJC11, mitochondrial inner membrane protein TMEM11 and with HSPA9. The MICOS and SAM complexes together with DNAJC11 are part of a large protein complex spanning both membranes termed the mitochondrial intermembrane space bridging (MIB) complex.

Its subcellular location is the mitochondrion inner membrane. Its function is as follows. Component of the MICOS complex, a large protein complex of the mitochondrial inner membrane that plays crucial roles in the maintenance of crista junctions, inner membrane architecture, and formation of contact sites to the outer membrane. Constituent of mature MICOS complex, it is required for the formation of cristae junction (CJ) and maintenance of cristae morphology. Required for the incorporation of MICOS10/MIC10 into the MICOS complex. In Sus scrofa (Pig), this protein is MICOS complex subunit MIC13.